We begin with the raw amino-acid sequence, 480 residues long: Endoplasmic reticulum lectin 1 (480 aa).

Residues 1–27 (MRRSDRFPCAGASLLVVLCGVFPSSFG) form the signal peptide. MRH domains lie at 108–245 (SSCS…LCNH) and 339–466 (SYCF…ICKI). A disulfide bond links Cys110 and Cys123. A disordered region spans residues 152-172 (VKKSPSEAGENQEDKERTEGH). Residues 163–172 (QEDKERTEGH) are compositionally biased toward basic and acidic residues. 5 cysteine pairs are disulfide-bonded: Cys198–Cys231, Cys214–Cys243, Cys341–Cys354, Cys418–Cys452, and Cys433–Cys464.

It localises to the endoplasmic reticulum lumen. Its function is as follows. Probable lectin that binds selectively to improperly folded lumenal proteins. May function in endoplasmic reticulum quality control and endoplasmic reticulum-associated degradation (ERAD) of both non-glycosylated proteins and glycoproteins. The polypeptide is Endoplasmic reticulum lectin 1 (erlec1) (Xenopus laevis (African clawed frog)).